The chain runs to 139 residues: Holo-[acyl-carrier-protein] synthase (139 aa).

Mg(2+) contacts are provided by Asp8 and Glu57.

The protein belongs to the P-Pant transferase superfamily. AcpS family. Mg(2+) is required as a cofactor.

It is found in the cytoplasm. The catalysed reaction is apo-[ACP] + CoA = holo-[ACP] + adenosine 3',5'-bisphosphate + H(+). Its function is as follows. Transfers the 4'-phosphopantetheine moiety from coenzyme A to a Ser of acyl-carrier-protein. This chain is Holo-[acyl-carrier-protein] synthase, found in Dinoroseobacter shibae (strain DSM 16493 / NCIMB 14021 / DFL 12).